A 450-amino-acid chain; its full sequence is 3-phosphoshikimate 1-carboxyvinyltransferase (450 aa).

3-phosphoshikimate is bound by residues K23, S24, and R28. Residue K23 participates in phosphoenolpyruvate binding. G96 and R124 together coordinate phosphoenolpyruvate. S167, S168, Q169, S196, E311, and H340 together coordinate 3-phosphoshikimate. Position 169 (Q169) interacts with phosphoenolpyruvate. E311 serves as the catalytic Proton acceptor. Phosphoenolpyruvate is bound by residues R344, R385, and K410. Residues 426–450 (GQGWGYPQPRSGQRARRATGQGSGG) are disordered.

Belongs to the EPSP synthase family. In terms of assembly, monomer.

The protein localises to the cytoplasm. The catalysed reaction is 3-phosphoshikimate + phosphoenolpyruvate = 5-O-(1-carboxyvinyl)-3-phosphoshikimate + phosphate. The protein operates within metabolic intermediate biosynthesis; chorismate biosynthesis; chorismate from D-erythrose 4-phosphate and phosphoenolpyruvate: step 6/7. In terms of biological role, catalyzes the transfer of the enolpyruvyl moiety of phosphoenolpyruvate (PEP) to the 5-hydroxyl of shikimate-3-phosphate (S3P) to produce enolpyruvyl shikimate-3-phosphate and inorganic phosphate. In Mycobacterium bovis (strain ATCC BAA-935 / AF2122/97), this protein is 3-phosphoshikimate 1-carboxyvinyltransferase.